The primary structure comprises 936 residues: Protein SIEL (936 aa).

Interacts with SHR, MGP, SCR, JKD, CPC, TMO7 and AGL21, but not with LFY or STM.

It localises to the nucleus. It is found in the endosome. The protein resides in the cytoplasm. Its subcellular location is the cell cortex. Intracellular shuttle that promotes movement of SHR from the stele into the endodermis. Required for SHR association to endosomes and localization, and for intercellular movement of SHR. The sequence is that of Protein SIEL from Arabidopsis thaliana (Mouse-ear cress).